The sequence spans 152 residues: Large ribosomal subunit protein bL9 (152 aa).

The protein belongs to the bacterial ribosomal protein bL9 family.

Binds to the 23S rRNA. This chain is Large ribosomal subunit protein bL9, found in Synechococcus sp. (strain WH7803).